The chain runs to 86 residues: MASFLSFLLGEKKQTASVAKERLQIILAHERTGRSHKPDYLPALQRDLIAVIAKYIHINPNDIKLHLERQDNLDVLEVKIELPDAK.

This sequence belongs to the MinE family.

In terms of biological role, prevents the cell division inhibition by proteins MinC and MinD at internal division sites while permitting inhibition at polar sites. This ensures cell division at the proper site by restricting the formation of a division septum at the midpoint of the long axis of the cell. This chain is Cell division topological specificity factor, found in Polaromonas sp. (strain JS666 / ATCC BAA-500).